The following is a 96-amino-acid chain: MNLRPLQDRIIVKRVEEATMTAGGLYIPETAKEKPQQGEVVAVGNGKRGEDGKVYPIDLKVGDKVLFGKYAGSEVKLEGEDFLIMREDDILGVVEK.

The protein belongs to the GroES chaperonin family. Heptamer of 7 subunits arranged in a ring. Interacts with the chaperonin GroEL.

It localises to the cytoplasm. Together with the chaperonin GroEL, plays an essential role in assisting protein folding. The GroEL-GroES system forms a nano-cage that allows encapsulation of the non-native substrate proteins and provides a physical environment optimized to promote and accelerate protein folding. GroES binds to the apical surface of the GroEL ring, thereby capping the opening of the GroEL channel. The protein is Co-chaperonin GroES of Citrifermentans bemidjiense (strain ATCC BAA-1014 / DSM 16622 / JCM 12645 / Bem) (Geobacter bemidjiensis).